We begin with the raw amino-acid sequence, 431 residues long: Signal recognition particle 54 kDa protein (431 aa).

Residues 105–112, 185–189, and 243–246 contribute to the GTP site; these read GVEGSGKT, DTAGR, and TKMD.

Belongs to the GTP-binding SRP family. SRP54 subfamily. As to quaternary structure, part of the signal recognition particle protein translocation system, which is composed of SRP and FtsY. Archaeal SRP consists of a 7S RNA molecule of 300 nucleotides and two protein subunits: SRP54 and SRP19.

Its subcellular location is the cytoplasm. The enzyme catalyses GTP + H2O = GDP + phosphate + H(+). Its function is as follows. Involved in targeting and insertion of nascent membrane proteins into the cytoplasmic membrane. Binds to the hydrophobic signal sequence of the ribosome-nascent chain (RNC) as it emerges from the ribosomes. The SRP-RNC complex is then targeted to the cytoplasmic membrane where it interacts with the SRP receptor FtsY. The sequence is that of Signal recognition particle 54 kDa protein from Pyrobaculum calidifontis (strain DSM 21063 / JCM 11548 / VA1).